A 417-amino-acid chain; its full sequence is UPF0761 membrane protein CV_0810 (417 aa).

7 helical membrane passes run 52-72, 79-99, 110-130, 150-170, 185-205, 214-234, and 258-278; these read LLAL…FPVF, FKIM…ITVY, LTAA…STIE, MVYW…LLSW, LLAS…VLAL, FVPF…LELT, and IPIF…GAVF.

The protein belongs to the UPF0761 family.

The protein localises to the cell inner membrane. In Chromobacterium violaceum (strain ATCC 12472 / DSM 30191 / JCM 1249 / CCUG 213 / NBRC 12614 / NCIMB 9131 / NCTC 9757 / MK), this protein is UPF0761 membrane protein CV_0810.